We begin with the raw amino-acid sequence, 293 residues long: DOMON domain-containing protein FRRS1L (293 aa).

A signal peptide spans 1–28; the sequence is MARPPRQHPGVWASLLLLLLTGPAACAA. The disordered stretch occupies residues 29 to 61; the sequence is SPADDGAGPGGRGPRGRARGDTGADEAVPRHDS. Basic and acidic residues predominate over residues 46–61; that stretch reads ARGDTGADEAVPRHDS. Positions 119–234 constitute a DOMON domain; the sequence is CDYFLSYRMI…WYYLFAWGPA (116 aa). The helical transmembrane segment at 271 to 291 threads the bilayer; sequence TFSSPFCLLLIVALTFYLLMG.

Component of the outer core of AMPAR complex. AMPAR complex consists of an inner core made of 4 pore-forming GluA/GRIA proteins (GRIA1, GRIA2, GRIA3 and GRIA4) and 4 major auxiliary subunits arranged in a twofold symmetry. One of the two pairs of distinct binding sites is occupied either by CNIH2, CNIH3 or CACNG2, CACNG3. The other harbors CACNG2, CACNG3, CACNG4, CACNG8 or GSG1L. This inner core of AMPAR complex is complemented by outer core constituents binding directly to the GluA/GRIA proteins at sites distinct from the interaction sites of the inner core constituents. Outer core constituents include at least PRRT1, PRRT2, CKAMP44/SHISA9, FRRS1L and NRN1. The proteins of the inner and outer core serve as a platform for other, more peripherally associated AMPAR constituents. Alone or in combination, these auxiliary subunits control the gating and pharmacology of the AMPAR complex and profoundly impact their biogenesis and protein processing. Expressed in adult and fetal brain. Very weak expression in medulla, spinal cord and in adult ovary.

The protein localises to the cell membrane. The protein resides in the synapse. Its function is as follows. Important modulator of glutamate signaling pathway. This chain is DOMON domain-containing protein FRRS1L (FRRS1L), found in Homo sapiens (Human).